The following is a 259-amino-acid chain: GTP cyclohydrolase FolE2 (259 aa).

The protein belongs to the GTP cyclohydrolase IV family.

The catalysed reaction is GTP + H2O = 7,8-dihydroneopterin 3'-triphosphate + formate + H(+). It participates in cofactor biosynthesis; 7,8-dihydroneopterin triphosphate biosynthesis; 7,8-dihydroneopterin triphosphate from GTP: step 1/1. Converts GTP to 7,8-dihydroneopterin triphosphate. The protein is GTP cyclohydrolase FolE2 of Nitratidesulfovibrio vulgaris (strain DSM 19637 / Miyazaki F) (Desulfovibrio vulgaris).